The primary structure comprises 511 residues: Coatomer subunit delta (511 aa).

Over residues 168-177 (QARRDAERQG) the composition is skewed to basic and acidic residues. The tract at residues 168–188 (QARRDAERQGKKAPGFGGFGS) is disordered. The residue at position 223 (Ser-223) is a Phosphoserine. Lys-233 and Lys-241 each carry N6-acetyllysine. At Ser-244 the chain carries Phosphoserine. The region spanning 271 to 511 (MESVHMKIEE…TFLVDKYEIL (241 aa)) is the MHD domain. N6-acetyllysine is present on residues Lys-309 and Lys-351. Ser-493 bears the Phosphoserine mark.

This sequence belongs to the adaptor complexes medium subunit family. Delta-COP subfamily. In terms of assembly, oligomeric complex that consists of at least the alpha, beta, beta', gamma, delta, epsilon and zeta subunits.

It is found in the cytoplasm. The protein resides in the golgi apparatus membrane. It localises to the cytoplasmic vesicle. The protein localises to the COPI-coated vesicle membrane. Functionally, the coatomer is a cytosolic protein complex that binds to dilysine motifs and reversibly associates with Golgi non-clathrin-coated vesicles, which further mediate biosynthetic protein transport from the ER, via the Golgi up to the trans Golgi network. Coatomer complex is required for budding from Golgi membranes, and is essential for the retrograde Golgi-to-ER transport of dilysine-tagged proteins. In mammals, the coatomer can only be recruited by membranes associated to ADP-ribosylation factors (ARFs), which are small GTP-binding proteins; the complex also influences the Golgi structural integrity, as well as the processing, activity, and endocytic recycling of LDL receptors. This is Coatomer subunit delta (Arcn1) from Mus musculus (Mouse).